The chain runs to 426 residues: Serine--tRNA ligase (426 aa).

231–233 (TAE) contacts L-serine. 262-264 (RSE) provides a ligand contact to ATP. Position 285 (Glu285) interacts with L-serine. Residue 349-352 (EISS) coordinates ATP. Ser385 is a binding site for L-serine.

The protein belongs to the class-II aminoacyl-tRNA synthetase family. Type-1 seryl-tRNA synthetase subfamily. Homodimer. The tRNA molecule binds across the dimer.

Its subcellular location is the cytoplasm. The catalysed reaction is tRNA(Ser) + L-serine + ATP = L-seryl-tRNA(Ser) + AMP + diphosphate + H(+). It carries out the reaction tRNA(Sec) + L-serine + ATP = L-seryl-tRNA(Sec) + AMP + diphosphate + H(+). It functions in the pathway aminoacyl-tRNA biosynthesis; selenocysteinyl-tRNA(Sec) biosynthesis; L-seryl-tRNA(Sec) from L-serine and tRNA(Sec): step 1/1. Catalyzes the attachment of serine to tRNA(Ser). Is also able to aminoacylate tRNA(Sec) with serine, to form the misacylated tRNA L-seryl-tRNA(Sec), which will be further converted into selenocysteinyl-tRNA(Sec). The sequence is that of Serine--tRNA ligase from Saccharophagus degradans (strain 2-40 / ATCC 43961 / DSM 17024).